The sequence spans 555 residues: Putative protein NRT1/ PTR FAMILY 2.14 (555 aa).

Helical transmembrane passes span Val62–Ile82, Ile93–Val113, Tyr135–Ile155, Phe181–Leu201, Trp209–Val229, Tyr234–Ala254, Ile319–Met339, Leu363–Phe383, Leu405–Val425, Val441–Gly461, Ser480–Val500, and Cys523–Ala543.

It belongs to the major facilitator superfamily. Proton-dependent oligopeptide transporter (POT/PTR) (TC 2.A.17) family. As to expression, not detected.

Its subcellular location is the membrane. In Arabidopsis thaliana (Mouse-ear cress), this protein is Putative protein NRT1/ PTR FAMILY 2.14 (NPF2.14).